Here is a 239-residue protein sequence, read N- to C-terminus: Fatty acid metabolism regulator protein (239 aa).

The HTH gntR-type domain maps to Gln-6 to Phe-74. The segment at residues Glu-34–Gln-53 is a DNA-binding region (H-T-H motif).

In terms of assembly, homodimer.

The protein resides in the cytoplasm. Functionally, multifunctional regulator of fatty acid metabolism. This chain is Fatty acid metabolism regulator protein, found in Klebsiella pneumoniae subsp. pneumoniae (strain ATCC 700721 / MGH 78578).